The chain runs to 348 residues: D-lactate dehydrogenase kk1H (348 aa).

NAD(+) contacts are provided by residues 158-159 (RI), D178, 208-209 (CP), 235-237 (TSR), and D261. R237 is a catalytic residue. The active site involves E266. H298 (proton donor) is an active-site residue.

The protein belongs to the D-isomer specific 2-hydroxyacid dehydrogenase family.

It functions in the pathway secondary metabolite biosynthesis. In terms of biological role, D-lactate dehydrogenase; part of the gene cluster that mediates the biosynthesis of KK-1, a novel cyclic depsipeptide with 10 residues which is a promising active compound with high activity against many plant pathogens, especially Botrytis cinerea. Within the pathway, kk1H catalyzes in the synthesis of D-lactic acid from pyruvic acid, which is recognized by the A domain of the first kk1B module. The nonribosomal peptide synthetase (NRPS) kk1B catalyzes the elongation and cyclization of the decapeptide chain composed of 1 D-lactic acid residue (D-Lac), 1 pipecolic acid residue (Pip), 1 aspartic acid residue (Asp), 1 isoleucine residue (Ile), 1 glycine residue (Gly), 1 tyrosine residue (Tyr) and 4 valine residues (Val). The Asp, Ile and 3 Val residues are N-methylated by the 5 methyltransferase domains from the NRPS (found in modules 3, 5, 6, 7 and 9), whereas the Tyr residue is O-methylated by the cluster encoded O-methyltransferase kk1A. The thioesterase kk1J is likely to be involved in the corrective mechanism of peptide chain synthesis. The D-lactate dehydrogenase kk1H is involved in the synthesis of D-lactic acid from pyruvic acid, which is recognized by the A domain of the first kk1B module. The pyrroline-5-carboxylate reductase kk1I is involved in the synthesis of the L-pipecolic acid residue of KK-1 from delta-1-pyrroline-5-carboxylate (P5C), a metabolic intermediate of lysine. It still is unclear how kk1C and kk1D are involved in the production of KK-1. The sequence is that of D-lactate dehydrogenase kk1H from Curvularia clavata.